The chain runs to 548 residues: Alpha-1,3-mannosyl-glycoprotein 4-beta-N-acetylglucosaminyltransferase B (548 aa).

Residues 1-7 lie on the Cytoplasmic side of the membrane; the sequence is MRLRNGT. The helical; Signal-anchor for type II membrane protein transmembrane segment at 8-28 threads the bilayer; it reads FLTLLLFCLCAFLSLSWYAAL. Topologically, residues 29–548 are lumenal; it reads SGQKGDVVDV…LSEIFLKKAD (520 aa). Residues 36 to 83 are a coiled coil; it reads VDVYQREFLALRDRLHAAEQESLKRSKELNLVLDEIKRAVSERQALRD. Asparagine 87 and asparagine 103 each carry an N-linked (GlcNAc...) asparagine glycan.

Belongs to the glycosyltransferase 54 family. As to quaternary structure, interacts with SLC35A3. A divalent metal cation is required as a cofactor. In terms of processing, N-glycosylated. Widely expressed. Strongly overexpressed in pancreatic cancer.

Its subcellular location is the golgi apparatus membrane. It catalyses the reaction an N(4)-{beta-D-GlcNAc-(1-&gt;2)-alpha-D-Man-(1-&gt;3)-[alpha-D-Man-(1-&gt;6)]-beta-D-Man-(1-&gt;4)-beta-D-GlcNAc-(1-&gt;4)-beta-D-GlcNAc}-L-asparaginyl-[protein] + UDP-N-acetyl-alpha-D-glucosamine = an N(4)-{beta-D-GlcNAc-(1-&gt;2)-[beta-D-GlcNAc-(1-&gt;4)]-alpha-D-Man-(1-&gt;3)-[alpha-D-Man-(1-&gt;6)]-beta-D-Man-(1-&gt;4)-beta-D-GlcNAc-(1-&gt;4)-beta-D-GlcNAc}-L-asparaginyl-[protein] + UDP + H(+). The enzyme catalyses N(4)-{beta-D-GlcNAc-(1-&gt;2)-alpha-D-Man-(1-&gt;3)-[beta-D-GlcNAc-(1-&gt;2)-alpha-D-Man-(1-&gt;6)]-beta-D-Man-(1-&gt;4)-beta-D-GlcNAc-(1-&gt;4)-beta-D-GlcNAc}-L-asparaginyl-[protein] + UDP-N-acetyl-alpha-D-glucosamine = N(4)-{beta-D-GlcNAc-(1-&gt;2)-[beta-D-GlcNAc-(1-&gt;4)]-alpha-D-Man-(1-&gt;3)-[beta-D-GlcNAc-(1-&gt;2)-alpha-D-Man-(1-&gt;6)]-beta-D-Man-(1-&gt;4)-beta-D-GlcNAc-(1-&gt;4)-beta-D-GlcNAc}-L-asparaginyl-[protein] + UDP + H(+). The catalysed reaction is an N(4)-{beta-D-GlcNAc-(1-&gt;2)-alpha-D-Man-(1-&gt;3)-[beta-D-GlcNAc-(1-&gt;2)-[beta-D-GlcNAc-(1-&gt;6)]-alpha-D-Man-(1-&gt;6)]-beta-D-Man-(1-&gt;4)-beta-D-GlcNAc-(1-&gt;4)-beta-D-GlcNAc}-L-asparaginyl-[protein] + UDP-N-acetyl-alpha-D-glucosamine = an N(4)-{beta-D-GlcNAc-(1-&gt;2)-[beta-D-GlcNAc-(1-&gt;4)]-alpha-D-Man-(1-&gt;3)-[beta-D-GlcNAc-(1-&gt;2)-[beta-D-GlcNAc-(1-&gt;6)]-alpha-D-Man-(1-&gt;6)]-beta-D-Man-(1-&gt;4)-beta-D-GlcNAc-(1-&gt;4)-beta-D-GlcNAc}-L-asparaginyl-[protein] + UDP + H(+). It carries out the reaction an N(4)-{beta-D-GlcNAc-(1-&gt;2)-alpha-D-Man-(1-&gt;3)-[beta-D-GlcNAc-(1-&gt;2)-alpha-D-Man-(1-&gt;6)]-beta-D-Man-(1-&gt;4)-beta-D-GlcNAc-(1-&gt;4)-[alpha-L-Fuc-(1-&gt;6)]-beta-D-GlcNAc}-L-asparaginyl-[protein] + UDP-N-acetyl-alpha-D-glucosamine = N(4)-{beta-D-GlcNAc-(1-&gt;2)-[beta-D-GlcNAc-(1-&gt;4)]-alpha-D-Man-(1-&gt;3)-[beta-D-GlcNAc-(1-&gt;2)-alpha-D-Man-(1-&gt;6)]-beta-D-Man-(1-&gt;4)-beta-D-GlcNAc-(1-&gt;4)-[alpha-L-Fuc-(1-&gt;6)]-beta-D-GlcNAc}-asparaginyl-[protein] + UDP + H(+). It catalyses the reaction an N(4)-{beta-D-GlcNAc-(1-&gt;2)-alpha-D-Man-(1-&gt;3)-[beta-D-Gal-(1-&gt;4)-beta-D-GlcNAc-(1-&gt;2)-alpha-D-Man-(1-&gt;6)]-beta-D-Man-(1-&gt;4)-beta-D-GlcNAc-(1-&gt;4)-beta-D-GlcNAc}-L-asparaginyl-[protein] + UDP-N-acetyl-alpha-D-glucosamine = an N(4)-{beta-D-GlcNAc-(1-&gt;2)-[beta-D-GlcNAc-(1-&gt;4)]-alpha-D-Man-(1-&gt;3)-[beta-D-Gal-(1-&gt;4)-beta-D-GlcNAc-(1-&gt;2)-alpha-D-Man-(1-&gt;6)]-beta-D-Man-(1-&gt;4)-beta-D-GlcNAc-(1-&gt;4)-beta-D-GlcNAc}-L-asparaginyl-[protein] + UDP + H(+). The enzyme catalyses N(4)-{beta-D-GlcNAc-(1-&gt;2)-alpha-D-Man-(1-&gt;3)-[alpha-D-Man-(1-&gt;3)-{alpha-D-Man-(1-&gt;6)}-alpha-D-Man-(1-&gt;6)]-beta-D-Man-(1-&gt;4)-beta-D-GlcNAc-(1-&gt;4)-beta-D-GlcNAc}-asparaginyl-[protein] + UDP-N-acetyl-alpha-D-glucosamine = N(4)-{beta-D-GlcNAc-(1-&gt;2)-[beta-D-GlcNAc-(1-&gt;4)]-alpha-D-Man-(1-&gt;3)-[alpha-D-Man-(1-&gt;3)-{alpha-D-Man-(1-&gt;6)}-alpha-D-Man-(1-&gt;6)]-beta-D-Man-(1-&gt;4)-beta-D-GlcNAc-(1-&gt;4)-beta-D-GlcNAc}-asparaginyl-[protein] + UDP + H(+). The catalysed reaction is N(4)-{beta-D-GlcNAc-(1-&gt;2)-alpha-D-Man-(1-&gt;3)-beta-D-Man-(1-&gt;4)-beta-D-GlcNAc-(1-&gt;4)-beta-D-GlcNAc}-asparaginyl-[protein] + UDP-N-acetyl-alpha-D-glucosamine = N(4)-{beta-D-GlcNAc-(1-&gt;2)-[beta-D-GlcNAc-(1-&gt;4)]-alpha-D-Man-(1-&gt;3)-beta-D-Man-(1-&gt;4)-beta-D-GlcNAc-(1-&gt;4)-beta-D-GlcNAc}-asparaginyl-[protein] + UDP + H(+). It participates in protein modification; protein glycosylation. Functionally, glycosyltransferase that catalyzes the transfer of GlcNAc from UDP-GlcNAc to the GlcNAcbeta1-2Manalpha1-3 arm of the core structure of N-linked glycans through a beta1-4 linkage and participates in the production of tri- and tetra-antennary N-linked sugar chains. Prefers complex-type N-glycans over hybrid-types. Has lower affinities for donors or acceptors than MGAT4A, suggesting that, under physiological conditions, it is not the main contributor in N-glycan biosynthesis. This is Alpha-1,3-mannosyl-glycoprotein 4-beta-N-acetylglucosaminyltransferase B from Homo sapiens (Human).